We begin with the raw amino-acid sequence, 231 residues long: RNA pyrophosphohydrolase (231 aa).

One can recognise a Nudix hydrolase domain in the interval 6–149; that stretch reads GFRPNVGIIL…KRDVYQLALT (144 aa). The Nudix box motif lies at 38–59; that stretch reads GGIKYGETPVQAMYRELHEETG. Residues 157 to 190 form a disordered region; that stretch reads RPQPRTERPGGHHHGQRYPRMASSVNAPPGASMA.

This sequence belongs to the Nudix hydrolase family. RppH subfamily. Requires a divalent metal cation as cofactor.

Functionally, accelerates the degradation of transcripts by removing pyrophosphate from the 5'-end of triphosphorylated RNA, leading to a more labile monophosphorylated state that can stimulate subsequent ribonuclease cleavage. This Paraburkholderia phymatum (strain DSM 17167 / CIP 108236 / LMG 21445 / STM815) (Burkholderia phymatum) protein is RNA pyrophosphohydrolase.